A 257-amino-acid chain; its full sequence is MATIKEVTALLAQVDSLDSPVWDQLAQDERAGVQAAIKKRRKELEKEAVEDARLEAMLFYEKSLYENGVEFIAGIDEVGRGPLAGPVVAAAVILPKGCKIRYLNDSKKIPKSKHEAIYQEVMERAVAVGVGIKDAALIDEVNIYEATKLAMLEALGKLSQKPDHLLIDAMKLDTPIPQTSIIKGDANSLSIAAASIVAKVTRDKMMADYDKEFSGYGFAKNAGYGTTEHLEGLNKLGITPIHRKTFEPIKSMVAGGN.

Residues Glu70–Asn257 form the RNase H type-2 domain. Positions 76, 77, and 168 each coordinate a divalent metal cation.

This sequence belongs to the RNase HII family. Mn(2+) is required as a cofactor. The cofactor is Mg(2+).

Its subcellular location is the cytoplasm. The enzyme catalyses Endonucleolytic cleavage to 5'-phosphomonoester.. Endonuclease that specifically degrades the RNA of RNA-DNA hybrids. The polypeptide is Ribonuclease HII (Streptococcus suis (strain 98HAH33)).